Consider the following 310-residue polypeptide: MSEDAVKNAILIAGPTASGKSALAIRMAKATGGFIVNTDSMQVYGVLDLLTARPSRADLAEAEHFLYGHVPPSSTYSTGKWFEDVEALLGRCELQGRVPIFVGGTGLYFRALLGGLSQMPEVSAQVRDHWRGRMEAEGAKALHAVLCVRDPAIAAALQPSDSQRIVRALEVLESTGKSLLEWQKVKGRALVDDQSAQKIVLRPDRAWLGERIARRFSAMWAEGAIDEVRALLALDLDPALPAMKAIGVREVSAFLAETMSREEAIERSVIATRQYAKRQSTWFRNQLGEDWRVYASGEEVFQGGSFRDPQ.

Residue 14–21 (GPTASGKS) coordinates ATP. 16 to 21 (TASGKS) provides a ligand contact to substrate. 2 interaction with substrate tRNA regions span residues 39 to 42 (DSMQ) and 163 to 167 (QRIVR).

This sequence belongs to the IPP transferase family. Monomer. Mg(2+) serves as cofactor.

It catalyses the reaction adenosine(37) in tRNA + dimethylallyl diphosphate = N(6)-dimethylallyladenosine(37) in tRNA + diphosphate. Functionally, catalyzes the transfer of a dimethylallyl group onto the adenine at position 37 in tRNAs that read codons beginning with uridine, leading to the formation of N6-(dimethylallyl)adenosine (i(6)A). The polypeptide is tRNA dimethylallyltransferase (Brucella ovis (strain ATCC 25840 / 63/290 / NCTC 10512)).